The following is a 365-amino-acid chain: Pituitary-specific positive transcription factor 1 (365 aa).

The 9aaTAD signature appears at 5-12; the sequence is AFSADSFT. Residues 160–191 form a disordered region; the sequence is PAVLSEEPPLGGTKDLRLRSRPPDDPPDMDSP. The segment covering 173 to 183 has biased composition (basic and acidic residues); it reads KDLRLRSRPPD. The region spanning 188 to 262 is the POU-specific domain; it reads MDSPQIRELE…ILAKWLDEAE (75 aa). Residues 278–337 constitute a DNA-binding region (homeobox); the sequence is KRKRRTTISLGAKEALERSFREKIKPSSQEIVRMAEGLHLEKEVVRVWFCNRRQREKRVK.

The protein belongs to the POU transcription factor family. Class-1 subfamily.

The protein resides in the nucleus. In terms of biological role, transcription factor that activates growth hormone and prolactin genes. Specifically binds to the consensus sequence 5'-TAAAT-3'. The protein is Pituitary-specific positive transcription factor 1 (pou1f1) of Oncorhynchus keta (Chum salmon).